The chain runs to 379 residues: Chaperone protein DnaJ (379 aa).

The region spanning 5 to 69 (DYYEVLGISK…NKRASYDQFG (65 aa)) is the J domain. The CR-type zinc-finger motif lies at 136–218 (GTTKEISIRK…CHGKGTENKT (83 aa)). Zn(2+) contacts are provided by cysteine 149, cysteine 152, cysteine 166, cysteine 169, cysteine 192, cysteine 195, cysteine 206, and cysteine 209. CXXCXGXG motif repeat units lie at residues 149 to 156 (CETCHGDG), 166 to 173 (CSYCNGAG), 192 to 199 (CPKCNGSG), and 206 to 213 (CPTCHGKG).

This sequence belongs to the DnaJ family. In terms of assembly, homodimer. Zn(2+) is required as a cofactor.

The protein resides in the cytoplasm. Functionally, participates actively in the response to hyperosmotic and heat shock by preventing the aggregation of stress-denatured proteins and by disaggregating proteins, also in an autonomous, DnaK-independent fashion. Unfolded proteins bind initially to DnaJ; upon interaction with the DnaJ-bound protein, DnaK hydrolyzes its bound ATP, resulting in the formation of a stable complex. GrpE releases ADP from DnaK; ATP binding to DnaK triggers the release of the substrate protein, thus completing the reaction cycle. Several rounds of ATP-dependent interactions between DnaJ, DnaK and GrpE are required for fully efficient folding. Also involved, together with DnaK and GrpE, in the DNA replication of plasmids through activation of initiation proteins. The polypeptide is Chaperone protein DnaJ (Staphylococcus aureus (strain USA300 / TCH1516)).